The chain runs to 192 residues: Large ribosomal subunit protein uL5 (192 aa).

It belongs to the universal ribosomal protein uL5 family. Part of the 50S ribosomal subunit; part of the 5S rRNA/L5/L18/L25 subcomplex. Contacts the 5S rRNA and the P site tRNA. Forms a bridge to the 30S subunit in the 70S ribosome.

This is one of the proteins that bind and probably mediate the attachment of the 5S RNA into the large ribosomal subunit, where it forms part of the central protuberance. In the 70S ribosome it contacts protein S13 of the 30S subunit (bridge B1b), connecting the 2 subunits; this bridge is implicated in subunit movement. Contacts the P site tRNA; the 5S rRNA and some of its associated proteins might help stabilize positioning of ribosome-bound tRNAs. This chain is Large ribosomal subunit protein uL5, found in Sphingopyxis alaskensis (strain DSM 13593 / LMG 18877 / RB2256) (Sphingomonas alaskensis).